Reading from the N-terminus, the 429-residue chain is Type II methyltransferase M.AgeI (429 aa).

The SAM-dependent MTase C5-type domain occupies 1–429 (MKTIDLFCGA…MAETIKVAIS (429 aa)). Cys80 is an active-site residue.

The protein belongs to the class I-like SAM-binding methyltransferase superfamily. C5-methyltransferase family.

It carries out the reaction a 2'-deoxycytidine in DNA + S-adenosyl-L-methionine = a 5-methyl-2'-deoxycytidine in DNA + S-adenosyl-L-homocysteine + H(+). Its function is as follows. A methylase, recognizes the double-stranded sequence 5'-ACCGGT-3', methylates C-3 on both strands, and protects the DNA from cleavage by the AgeI endonuclease. The polypeptide is Type II methyltransferase M.AgeI (ageIM) (Thalassovita gelatinovora (Thalassobius gelatinovorus)).